Reading from the N-terminus, the 153-residue chain is Pheromone-binding protein Gp-9 (153 aa).

An N-terminal signal peptide occupies residues 1-19 (MKTFVLHIFIFALVAFASA). Intrachain disulfides connect cysteine 37–cysteine 77, cysteine 73–cysteine 129, and cysteine 118–cysteine 138.

The protein belongs to the PBP/GOBP family. As to quaternary structure, homodimer.

The protein resides in the secreted. Its function is as follows. Colony queen number, a major feature of social organization, is associated with worker genotype for Gp-9. Colonies are headed by either a single reproductive queen (monogyne form) or multiple queens (polygyne form). Differences in worker Gp-9 genotypes between social forms may cause differences in workers' abilities to recognize queens and regulate their numbers. The polypeptide is Pheromone-binding protein Gp-9 (Solenopsis daguerrei (Workerless parasitic ant)).